A 328-amino-acid polypeptide reads, in one-letter code: uncharacterized protein (328 aa).

This is an uncharacterized protein from Saccharomyces cerevisiae (strain ATCC 204508 / S288c) (Baker's yeast).